The sequence spans 825 residues: PR domain zinc finger protein 1 (825 aa).

The region spanning proline 84 to cysteine 201 is the SET domain. Positions isoleucine 324–serine 361 are enriched in low complexity. Residues isoleucine 324–glutamate 369 form a disordered region. Residues histidine 527–lysine 574 form an interaction with PIAS1 region. 4 consecutive C2H2-type zinc fingers follow at residues tyrosine 575–histidine 597, phenylalanine 603–histidine 625, histidine 631–histidine 653, and tyrosine 659–histidine 681. Lysine 816 is covalently cross-linked (Glycyl lysine isopeptide (Lys-Gly) (interchain with G-Cter in SUMO1); alternate). Lysine 816 is covalently cross-linked (Glycyl lysine isopeptide (Lys-Gly) (interchain with G-Cter in SUMO2); alternate).

The protein belongs to the class V-like SAM-binding methyltransferase superfamily. Interacts with PRMT5. Interacts with FBXO10. Interacts with FBXO11. Interacts with multiple nuclear sumoylation E3 ligases, including CBX4, PIAS1, PIAS2, PIAS3, PIAS4, PML and RNF4, but not RANBP2. Interacts with LDB1, SMARCD3 and SMARCC1. Interacts with EEIG1; following TNFSF11/RANKL stimulation in bone marrow-derived macrophages, the interaction promotes the binding of PRDM1/BLIMP1 to the gene promoter of IRF8. Post-translationally, sumoylation at Lys-816 by PIAS1 augments transcriptional repressor activity, and is critical for plasma cell differentiation. Can be sumoylated with SUMO1 and SUMO2 by PML. Degradation of the wild-type protein mostly depends upon sumoylation, rather than ubiquitination. Desumoylated by SENP1 and SENP6. In terms of processing, ubiquitinated by the SCF(FBXO11) complex, leading to its degradation by the proteasome.

Its subcellular location is the nucleus. The protein localises to the cytoplasm. Its function is as follows. Transcription factor that mediates a transcriptional program in various innate and adaptive immune tissue-resident lymphocyte T cell types such as tissue-resident memory T (Trm), natural killer (trNK) and natural killer T (NKT) cells and negatively regulates gene expression of proteins that promote the egress of tissue-resident T-cell populations from non-lymphoid organs. Plays a role in the development, retention and long-term establishment of adaptive and innate tissue-resident lymphocyte T cell types in non-lymphoid organs, such as the skin and gut, but also in other nonbarrier tissues like liver and kidney, and therefore may provide immediate immunological protection against reactivating infections or viral reinfection. Binds specifically to the PRDI element in the promoter of the beta-interferon gene. Drives the maturation of B-lymphocytes into Ig secreting cells. Associates with the transcriptional repressor ZNF683 to chromatin at gene promoter regions. Binds to the promoter and acts as a transcriptional repressor of IRF8, thereby promotes transcription of osteoclast differentiation factors such as NFATC1 and EEIG1. The sequence is that of PR domain zinc finger protein 1 (PRDM1) from Homo sapiens (Human).